Reading from the N-terminus, the 72-residue chain is Large ribosomal subunit protein bL31 (72 aa).

Zn(2+) is bound by residues Cys-16, Cys-18, Cys-37, and Cys-40.

This sequence belongs to the bacterial ribosomal protein bL31 family. Type A subfamily. As to quaternary structure, part of the 50S ribosomal subunit. It depends on Zn(2+) as a cofactor.

Binds the 23S rRNA. This chain is Large ribosomal subunit protein bL31, found in Idiomarina loihiensis (strain ATCC BAA-735 / DSM 15497 / L2-TR).